A 238-amino-acid chain; its full sequence is Fatty acid metabolism regulator protein (238 aa).

The HTH gntR-type domain maps to 6–74 (KGPASFAEKY…HGKPTRVNNF (69 aa)). The segment at residues 34–53 (ERELSELIGVTRTTLREVLQ) is a DNA-binding region (H-T-H motif).

In terms of assembly, homodimer.

The protein resides in the cytoplasm. Its function is as follows. Multifunctional regulator of fatty acid metabolism. This is Fatty acid metabolism regulator protein from Shewanella putrefaciens (strain CN-32 / ATCC BAA-453).